We begin with the raw amino-acid sequence, 156 residues long: ATP synthase subunit b (156 aa).

A helical membrane pass occupies residues 7–29 (LLGQAIAFALFVWFCMKYVWPPI).

It belongs to the ATPase B chain family. In terms of assembly, F-type ATPases have 2 components, F(1) - the catalytic core - and F(0) - the membrane proton channel. F(1) has five subunits: alpha(3), beta(3), gamma(1), delta(1), epsilon(1). F(0) has three main subunits: a(1), b(2) and c(10-14). The alpha and beta chains form an alternating ring which encloses part of the gamma chain. F(1) is attached to F(0) by a central stalk formed by the gamma and epsilon chains, while a peripheral stalk is formed by the delta and b chains.

The protein resides in the cell inner membrane. F(1)F(0) ATP synthase produces ATP from ADP in the presence of a proton or sodium gradient. F-type ATPases consist of two structural domains, F(1) containing the extramembraneous catalytic core and F(0) containing the membrane proton channel, linked together by a central stalk and a peripheral stalk. During catalysis, ATP synthesis in the catalytic domain of F(1) is coupled via a rotary mechanism of the central stalk subunits to proton translocation. Functionally, component of the F(0) channel, it forms part of the peripheral stalk, linking F(1) to F(0). This Aliivibrio salmonicida (strain LFI1238) (Vibrio salmonicida (strain LFI1238)) protein is ATP synthase subunit b.